Reading from the N-terminus, the 113-residue chain is Integration host factor subunit alpha (113 aa).

The tract at residues 88–113 (ALNGGVSDETEGADDDDDDEEGEGDE) is disordered. A compositionally biased stretch (acidic residues) spans 95–113 (DETEGADDDDDDEEGEGDE).

Belongs to the bacterial histone-like protein family. As to quaternary structure, heterodimer of an alpha and a beta chain.

In terms of biological role, this protein is one of the two subunits of integration host factor, a specific DNA-binding protein that functions in genetic recombination as well as in transcriptional and translational control. This Anaeromyxobacter dehalogenans (strain 2CP-C) protein is Integration host factor subunit alpha.